A 165-amino-acid chain; its full sequence is uncharacterized protein (165 aa).

A signal peptide spans 1–17 (MIRGFFLILLFLLLAFF).

This is an uncharacterized protein from Aquifex aeolicus (strain VF5).